We begin with the raw amino-acid sequence, 175 residues long: Large ribosomal subunit protein uL18 (175 aa).

Belongs to the universal ribosomal protein uL18 family. In terms of assembly, part of the 50S ribosomal subunit. Contacts the 5S and 23S rRNAs.

In terms of biological role, this is one of the proteins that bind and probably mediate the attachment of the 5S RNA into the large ribosomal subunit, where it forms part of the central protuberance. This chain is Large ribosomal subunit protein uL18, found in Methanospirillum hungatei JF-1 (strain ATCC 27890 / DSM 864 / NBRC 100397 / JF-1).